The chain runs to 515 residues: 1-pyrroline-5-carboxylate dehydrogenase (515 aa).

Active-site residues include Glu-286 and Cys-320.

It belongs to the aldehyde dehydrogenase family. RocA subfamily.

The catalysed reaction is L-glutamate 5-semialdehyde + NAD(+) + H2O = L-glutamate + NADH + 2 H(+). It participates in amino-acid degradation; L-proline degradation into L-glutamate; L-glutamate from L-proline: step 2/2. The chain is 1-pyrroline-5-carboxylate dehydrogenase from Anoxybacillus flavithermus (strain DSM 21510 / WK1).